Here is a 454-residue protein sequence, read N- to C-terminus: Inner membrane permease YgbN (454 aa).

Residue Met-1 is a topological domain, periplasmic. Residues 2-22 (STITLLCIALAGVIMLLLLVI) form a helical membrane-spanning segment. Residues 23 to 27 (KAKVQ) are Cytoplasmic-facing. A helical transmembrane segment spans residues 28–48 (PFVALLLVSLLVALAAGIPAG). The Periplasmic segment spans residues 49–52 (EVGK). Residues 53-73 (VMIAGMGGVLGSVTIIIGLGA) traverse the membrane as a helical segment. At 74–108 (MLGRMIEHSGGAESLANYFSRKLGDKRTIAALTLA) the chain is on the cytoplasmic side. The helical transmembrane segment at 109 to 129 (AFFLGIPVFFDVGFIILAPII) threads the bilayer. Over 130–137 (YGFAKVAK) the chain is Periplasmic. A helical transmembrane segment spans residues 138 to 158 (ISPLKFGLPVAGIMLTVHVAV). The Cytoplasmic segment spans residues 159-174 (PPHPGPVAAAGLLHAD). The chain crosses the membrane as a helical span at residues 175 to 195 (IGWLTIIGIAISIPVGVVGYF). Residues 196 to 235 (AAKIINKRQYAMSVEVLEQMQLAPASEEGATKLSDKINPP) lie on the Periplasmic side of the membrane. The chain crosses the membrane as a helical span at residues 236–256 (GVALVTSLIVIPIAIIMAGTV). The Cytoplasmic segment spans residues 257 to 273 (SATLMPPSHPLLGTLQL). A helical transmembrane segment spans residues 274–294 (IGSPMVALMIALVLAFWLLAL). Topologically, residues 295 to 305 (RRGWSLQHTSD) are periplasmic. A helical membrane pass occupies residues 306–326 (IMGSALPTAAVVILVTGAGGV). Topologically, residues 327-341 (FGKVLVESGVGKALA) are cytoplasmic. The chain crosses the membrane as a helical span at residues 342 to 362 (NMLQMIDLPLLPAAFIISLAL). The Periplasmic portion of the chain corresponds to 363-383 (RASQGSATVAILTTGGLLSEA). A helical membrane pass occupies residues 384–404 (VMGLNPIQCVLVTLAACFGGL). The Cytoplasmic portion of the chain corresponds to 405–433 (GASHINDSGFWIVTKYLGLSVADGLKTWT). Residues 434 to 454 (VLTTILGFTGFLITWCVWAVI) form a helical membrane-spanning segment.

This sequence belongs to the GntP permease family.

The protein resides in the cell inner membrane. This Escherichia coli (strain K12) protein is Inner membrane permease YgbN (ygbN).